The chain runs to 400 residues: Probable S-adenosylmethionine synthase (400 aa).

Lys135–Asp140 lines the ATP pocket.

It belongs to the AdoMet synthase 2 family. Mg(2+) is required as a cofactor.

The enzyme catalyses L-methionine + ATP + H2O = S-adenosyl-L-methionine + phosphate + diphosphate. It participates in amino-acid biosynthesis; S-adenosyl-L-methionine biosynthesis; S-adenosyl-L-methionine from L-methionine: step 1/1. Catalyzes the formation of S-adenosylmethionine from methionine and ATP. This Aquifex aeolicus (strain VF5) protein is Probable S-adenosylmethionine synthase (mat).